Here is a 220-residue protein sequence, read N- to C-terminus: Iron-sulfur cluster repair protein YtfE (220 aa).

The protein belongs to the RIC family. YtfE subfamily. As to quaternary structure, homodimer.

It is found in the cytoplasm. In terms of biological role, di-iron-containing protein involved in the repair of iron-sulfur clusters damaged by oxidative and nitrosative stress conditions. The protein is Iron-sulfur cluster repair protein YtfE of Salmonella typhimurium (strain LT2 / SGSC1412 / ATCC 700720).